Consider the following 508-residue polypeptide: Photosystem II CP47 reaction center protein (508 aa).

A run of 6 helical transmembrane segments spans residues 21–36 (SVHI…WAGS), 101–115 (IVFS…IWHW), 140–156 (GIHL…FGAF), 203–218 (IAAG…FHLS), 237–252 (VLSS…AFVV), and 457–472 (TFAL…HGAR).

This sequence belongs to the PsbB/PsbC family. PsbB subfamily. PSII is composed of 1 copy each of membrane proteins PsbA, PsbB, PsbC, PsbD, PsbE, PsbF, PsbH, PsbI, PsbJ, PsbK, PsbL, PsbM, PsbT, PsbX, PsbY, PsbZ, Psb30/Ycf12, at least 3 peripheral proteins of the oxygen-evolving complex and a large number of cofactors. It forms dimeric complexes. Binds multiple chlorophylls. PSII binds additional chlorophylls, carotenoids and specific lipids. serves as cofactor.

It is found in the plastid. Its subcellular location is the chloroplast thylakoid membrane. One of the components of the core complex of photosystem II (PSII). It binds chlorophyll and helps catalyze the primary light-induced photochemical processes of PSII. PSII is a light-driven water:plastoquinone oxidoreductase, using light energy to abstract electrons from H(2)O, generating O(2) and a proton gradient subsequently used for ATP formation. This is Photosystem II CP47 reaction center protein from Zea mays (Maize).